The following is a 370-amino-acid chain: Putative glutamate--cysteine ligase 2 (370 aa).

This sequence belongs to the glutamate--cysteine ligase type 2 family. YbdK subfamily.

The catalysed reaction is L-cysteine + L-glutamate + ATP = gamma-L-glutamyl-L-cysteine + ADP + phosphate + H(+). Functionally, ATP-dependent carboxylate-amine ligase which exhibits weak glutamate--cysteine ligase activity. This Janthinobacterium sp. (strain Marseille) (Minibacterium massiliensis) protein is Putative glutamate--cysteine ligase 2.